The following is a 187-amino-acid chain: Intermembrane transport lipoprotein PqiC (187 aa).

The first 15 residues, 1-15 (MKKWLVTIAALWLAG), serve as a signal peptide directing secretion. Residue C16 is the site of N-palmitoyl cysteine attachment. C16 carries the S-diacylglycerol cysteine lipid modification.

In terms of assembly, may form a complex composed of PqiA, PqiB and PqiC. Interacts with PqiB.

The protein resides in the cell outer membrane. In terms of biological role, component of a transport pathway that contributes to membrane integrity. This Escherichia coli (strain K12) protein is Intermembrane transport lipoprotein PqiC.